The following is a 211-amino-acid chain: Protein-L-isoaspartate O-methyltransferase (211 aa).

Ser60 is a catalytic residue.

It belongs to the methyltransferase superfamily. L-isoaspartyl/D-aspartyl protein methyltransferase family.

It localises to the cytoplasm. The catalysed reaction is [protein]-L-isoaspartate + S-adenosyl-L-methionine = [protein]-L-isoaspartate alpha-methyl ester + S-adenosyl-L-homocysteine. Functionally, catalyzes the methyl esterification of L-isoaspartyl residues in peptides and proteins that result from spontaneous decomposition of normal L-aspartyl and L-asparaginyl residues. It plays a role in the repair and/or degradation of damaged proteins. This is Protein-L-isoaspartate O-methyltransferase from Hahella chejuensis (strain KCTC 2396).